The following is a 171-amino-acid chain: Mitochondrial import inner membrane translocase subunit Tim17-A (171 aa).

Residues Cys-9 and Cys-78 are joined by a disulfide bond. A run of 3 helical transmembrane segments spans residues Cys-17–Phe-37, Gly-63–Asp-77, and Val-113–Leu-133. The interval Phe-147–Gln-171 is disordered. Over residues Gln-153–Pro-163 the composition is skewed to low complexity.

Belongs to the Tim17/Tim22/Tim23 family. Component of the TIM23 complex at least composed of TIMM23, TIMM17 (TIMM17A or TIMM17B) and TIMM50. The complex interacts with the TIMM44 component of the PAM complex and with DNAJC15. In terms of processing, degraded by YMEL1 downstream of the integrated stress response (ISR).

Its subcellular location is the mitochondrion inner membrane. In terms of biological role, essential component of the TIM23 complex, a complex that mediates the translocation of transit peptide-containing proteins across the mitochondrial inner membrane. This is Mitochondrial import inner membrane translocase subunit Tim17-A (Timm17a) from Rattus norvegicus (Rat).